The primary structure comprises 153 residues: Ribosome maturation factor RimP (153 aa).

It belongs to the RimP family.

The protein resides in the cytoplasm. Functionally, required for maturation of 30S ribosomal subunits. The protein is Ribosome maturation factor RimP of Clostridium botulinum (strain ATCC 19397 / Type A).